A 214-amino-acid polypeptide reads, in one-letter code: Phosphatidylserine decarboxylase proenzyme (214 aa).

S182 functions as the Schiff-base intermediate with substrate; via pyruvic acid in the catalytic mechanism. Residue S182 is modified to Pyruvic acid (Ser); by autocatalysis.

This sequence belongs to the phosphatidylserine decarboxylase family. PSD-A subfamily. In terms of assembly, heterodimer of a large membrane-associated beta subunit and a small pyruvoyl-containing alpha subunit. It depends on pyruvate as a cofactor. Post-translationally, is synthesized initially as an inactive proenzyme. Formation of the active enzyme involves a self-maturation process in which the active site pyruvoyl group is generated from an internal serine residue via an autocatalytic post-translational modification. Two non-identical subunits are generated from the proenzyme in this reaction, and the pyruvate is formed at the N-terminus of the alpha chain, which is derived from the carboxyl end of the proenzyme. The post-translation cleavage follows an unusual pathway, termed non-hydrolytic serinolysis, in which the side chain hydroxyl group of the serine supplies its oxygen atom to form the C-terminus of the beta chain, while the remainder of the serine residue undergoes an oxidative deamination to produce ammonia and the pyruvoyl prosthetic group on the alpha chain.

The protein resides in the cell membrane. It carries out the reaction a 1,2-diacyl-sn-glycero-3-phospho-L-serine + H(+) = a 1,2-diacyl-sn-glycero-3-phosphoethanolamine + CO2. Its pathway is phospholipid metabolism; phosphatidylethanolamine biosynthesis; phosphatidylethanolamine from CDP-diacylglycerol: step 2/2. Functionally, catalyzes the formation of phosphatidylethanolamine (PtdEtn) from phosphatidylserine (PtdSer). This is Phosphatidylserine decarboxylase proenzyme from Burkholderia vietnamiensis (strain G4 / LMG 22486) (Burkholderia cepacia (strain R1808)).